Here is a 284-residue protein sequence, read N- to C-terminus: uncharacterized protein (284 aa).

The first 23 residues, 1 to 23 (MKRGCAIAVMICGLITSVSAASA), serve as a signal peptide directing secretion.

The protein belongs to the surface antigen msp4 family.

This is an uncharacterized protein from Brucella melitensis biotype 1 (strain ATCC 23456 / CCUG 17765 / NCTC 10094 / 16M).